The sequence spans 179 residues: Large ribosomal subunit protein uL5 (179 aa).

It belongs to the universal ribosomal protein uL5 family. In terms of assembly, part of the 50S ribosomal subunit; part of the 5S rRNA/L5/L18/L25 subcomplex. Contacts the 5S rRNA and the P site tRNA. Forms a bridge to the 30S subunit in the 70S ribosome.

Its function is as follows. This is one of the proteins that bind and probably mediate the attachment of the 5S RNA into the large ribosomal subunit, where it forms part of the central protuberance. In the 70S ribosome it contacts protein S13 of the 30S subunit (bridge B1b), connecting the 2 subunits; this bridge is implicated in subunit movement. Contacts the P site tRNA; the 5S rRNA and some of its associated proteins might help stabilize positioning of ribosome-bound tRNAs. The polypeptide is Large ribosomal subunit protein uL5 (Dechloromonas aromatica (strain RCB)).